We begin with the raw amino-acid sequence, 611 residues long: Pescadillo homolog (611 aa).

The interval 310–335 (VQMGDPDEASPGEEEQFVAHASKSAP) is disordered. The segment covering 314-325 (DPDEASPGEEEQ) has biased composition (acidic residues). The 102-residue stretch at 354–455 (PSSRLFAPYT…KILLEDTYAQ (102 aa)) folds into the BRCT domain. Disordered regions lie at residues 469–506 (YEGA…ESNT) and 545–611 (VKKA…AGGK). The segment covering 482–498 (ADMDVETDGEEGEADAS) has biased composition (acidic residues). Basic and acidic residues-rich tracts occupy residues 552-569 (KKPD…KDMN) and 579-602 (KLYE…EQRK). A coiled-coil region spans residues 580-609 (LYEKMKYSQQKKAAEKEKLEQRKKQLQKAG).

The protein belongs to the pescadillo family. As to quaternary structure, component of the NOP7 complex, composed of ERB1, NOP7 and YTM1. The complex is held together by ERB1, which interacts with NOP7 via its N-terminal domain and with YTM1 via a high-affinity interaction between the seven-bladed beta-propeller domains of the 2 proteins. The NOP7 complex associates with the 66S pre-ribosome.

The protein resides in the nucleus. The protein localises to the nucleolus. It localises to the nucleoplasm. In terms of biological role, component of the NOP7 complex, which is required for maturation of the 25S and 5.8S ribosomal RNAs and formation of the 60S ribosome. The protein is Pescadillo homolog of Coprinopsis cinerea (strain Okayama-7 / 130 / ATCC MYA-4618 / FGSC 9003) (Inky cap fungus).